The sequence spans 217 residues: Protein-L-isoaspartate O-methyltransferase (217 aa).

Ser-62 is a catalytic residue.

The protein belongs to the methyltransferase superfamily. L-isoaspartyl/D-aspartyl protein methyltransferase family.

The protein resides in the cytoplasm. It carries out the reaction [protein]-L-isoaspartate + S-adenosyl-L-methionine = [protein]-L-isoaspartate alpha-methyl ester + S-adenosyl-L-homocysteine. Catalyzes the methyl esterification of L-isoaspartyl residues in peptides and proteins that result from spontaneous decomposition of normal L-aspartyl and L-asparaginyl residues. It plays a role in the repair and/or degradation of damaged proteins. The polypeptide is Protein-L-isoaspartate O-methyltransferase (Trichlorobacter lovleyi (strain ATCC BAA-1151 / DSM 17278 / SZ) (Geobacter lovleyi)).